We begin with the raw amino-acid sequence, 420 residues long: MSLKERKSINECDLKGKKVLIRVDFNVPLDDGNITNDYRIRSALPAVQKVLTEGGSCVLMSHLGRPKGVSMAEGKELRSTGGIPGFEQKATLKPVAKALSELLSRPVTFAPDCLNAADVVSKMSPGDVVLLENVRFYKEEGSKSTEEREAMAKILASYGDVYISDAFGTAHRDSATMTGIPKILGHGAAGYLMEKEISYFAKVLGNPPRPLVAIVGGAKVSDKIQLLDNMLQRIDYLLIGGAMAYTFLKAQGYSIGISMCEESKLEFARSLLKKAEDRKVQVILPIDHVCHTEFKAVDSPLITEDQNIPEGHMALDIGPKTIEKYVQTIGKCKSAIWNGPMGVFEMVPYSKGTFAIAKAMGRGTHEHGLMSIIGGGESAGAAELCGEAARISHVSTGGGASLELLEGKTLPGVTVLDEKE.

Residues valine 23, aspartate 24, phenylalanine 25, asparagine 26, arginine 39, serine 61, histidine 62, glycine 64, arginine 65, arginine 135, histidine 171, and arginine 172 each contribute to the (2R)-3-phosphoglycerate site. The ADP site is built by glycine 217 and alanine 218. Residue glycine 217 participates in CDP binding. AMP-binding residues include alanine 218 and lysine 219. An ATP-binding site is contributed by alanine 218. Mg(2+) is bound at residue alanine 218. Lysine 219 provides a ligand contact to (2R)-3-phosphoglycerate. Residue aspartate 222 coordinates CDP. Aspartate 222 contributes to the Mg(2+) binding site. ADP contacts are provided by lysine 223 and glycine 241. AMP is bound at residue lysine 223. Residue lysine 223 participates in ATP binding. Glycine 241 contacts CDP. AMP-binding residues include alanine 242 and alanine 314. Residues alanine 242 and alanine 314 each coordinate ATP. Residues alanine 314 and asparagine 338 each coordinate ADP. CDP-binding residues include glycine 339 and phenylalanine 344. 4 residues coordinate ADP: phenylalanine 344, glutamate 345, glutamate 377, and serine 378. Residue glutamate 345 coordinates AMP. ATP-binding residues include glutamate 345, glutamate 377, and serine 378. Glutamate 377 is a binding site for Mg(2+).

It belongs to the phosphoglycerate kinase family. In terms of assembly, monomer. Mg(2+) serves as cofactor.

The protein localises to the cytoplasm. It carries out the reaction (2R)-3-phosphoglycerate + ATP = (2R)-3-phospho-glyceroyl phosphate + ADP. Its pathway is carbohydrate degradation; glycolysis; pyruvate from D-glyceraldehyde 3-phosphate: step 2/5. The protein is Phosphoglycerate kinase, cytosolic of Trypanosoma brucei brucei.